Consider the following 409-residue polypeptide: Threonine dehydratase-like protein AKTS1-1 (409 aa).

Residues 1–21 (MADYLRQVMPENDSDSEALPR) are disordered. K111 is modified (N6-(pyridoxal phosphate)lysine). Pyridoxal 5'-phosphate contacts are provided by residues N138, 239-243 (GEGSL), and S368.

Belongs to the serine/threonine dehydratase family. Pyridoxal 5'-phosphate serves as cofactor.

It participates in mycotoxin biosynthesis. Functionally, threonine dehydratase-like protein; part of the gene clusters that mediate the biosynthesis of the host-selective toxins (HSTs) AK-toxins responsible for Japanese pear black spot disease by the Japanese pear pathotype. AK-toxins are esters of 9,10-epoxy 8-hydroxy 9-methyldecatrienoic acid (EDA). On cellular level, AK-toxins affect plasma membrane of susceptible cells and cause a sudden increase in loss of K(+) after a few minutes of toxin treatment. The acyl-CoA ligase AKT1, the hydrolase AKT2 and enoyl-CoA hydratase AKT3 are all involved in the biosynthesis of the AK-, AF- and ACT-toxin common 9,10-epoxy-8-hydroxy-9-methyl-decatrienoic acid (EDA) structural moiety. Part of the EDA biosynthesis occurs in the peroxisome since these 3 enzymes are localized in peroxisomes. The exact roles of the 3 enzymes, as well as of additional AK-toxin clusters enzymes, including AKT4, AKT6 and AKTS1, have still to be elucidated. The Cytochrome P450 monooxygenase AKT7 on the other side functions to limit production of EDA and AK-toxin, probably via the catalysis of a side reaction of EDA or its precursor. The protein is Threonine dehydratase-like protein AKTS1-1 of Alternaria alternata (Alternaria rot fungus).